The primary structure comprises 93 residues: UPF0728 protein C10orf53 (93 aa).

Belongs to the UPF0728 family.

The chain is UPF0728 protein C10orf53 (C10orf53) from Homo sapiens (Human).